The chain runs to 123 residues: Small ribosomal subunit protein uS13 (123 aa).

Positions 97–123 are disordered; that stretch reads PVRGQRTKTNARTRKGPRKTVGVRRKK.

The protein belongs to the universal ribosomal protein uS13 family. Part of the 30S ribosomal subunit. Forms a loose heterodimer with protein S19. Forms two bridges to the 50S subunit in the 70S ribosome.

In terms of biological role, located at the top of the head of the 30S subunit, it contacts several helices of the 16S rRNA. In the 70S ribosome it contacts the 23S rRNA (bridge B1a) and protein L5 of the 50S subunit (bridge B1b), connecting the 2 subunits; these bridges are implicated in subunit movement. Contacts the tRNAs in the A and P-sites. The protein is Small ribosomal subunit protein uS13 of Pelotomaculum thermopropionicum (strain DSM 13744 / JCM 10971 / SI).